We begin with the raw amino-acid sequence, 377 residues long: Nuclear pore complex protein NUP54 (377 aa).

Low complexity predominate over residues 1–18 (MFGTPSSSPSFGTPSSTP). Positions 1 to 104 (MFGTPSSSPS…NTAQQQQQTP (104 aa)) are disordered. Repeat copies occupy residues 2 to 3 (FG), 11 to 12 (FG), 20 to 21 (FG), 27 to 28 (FG), 36 to 37 (FG), 49 to 50 (FG), and 87 to 88 (FG). Residues 2 to 88 (FGTPSSSPSF…FQQQPSSNFG (87 aa)) form a 7 X 2 AA repeats of F-G region. The segment covering 19 to 32 (AFGTSSPAFGTPSA) has biased composition (polar residues). The span at 39-104 (PSNPSFSSGG…NTAQQQQQTP (66 aa)) shows a compositional bias: low complexity.

This sequence belongs to the NUP54 family. In terms of assembly, part of the nuclear pore complex (NPC). The NPC has an eight-fold symmetrical structure comprising a central transport channel and two rings, the cytoplasmic and nuclear rings, to which eight filaments are attached. The cytoplasmic filaments have loose ends, while the nuclear filaments are joined in a distal ring, forming a nuclear basket. NPCs are highly dynamic in configuration and composition, and can be devided in 3 subcomplexes, the NUP62 subcomplex, the NUP107-160 subcomplex and the NUP93 subcomplex, containing approximately 30 different nucleoporin proteins.

It localises to the nucleus envelope. It is found in the nucleus. The protein resides in the nuclear pore complex. This is Nuclear pore complex protein NUP54 from Arabidopsis thaliana (Mouse-ear cress).